Consider the following 415-residue polypeptide: DNA polymerase IV (415 aa).

Residues 15 to 196 (ILHVDMNCFF…LSVEAMHGIG (182 aa)) form the UmuC domain. Mg(2+) contacts are provided by Asp-19 and Asp-115. Residue Glu-116 is part of the active site. Residues 235 to 246 (KRAKGTDDREVD) are compositionally biased toward basic and acidic residues. Positions 235-260 (KRAKGTDDREVDPSQMGQHKSVGNSM) are disordered. A compositionally biased stretch (polar residues) spans 249-260 (QMGQHKSVGNSM).

Belongs to the DNA polymerase type-Y family. In terms of assembly, monomer. The cofactor is Mg(2+).

It localises to the cytoplasm. It carries out the reaction DNA(n) + a 2'-deoxyribonucleoside 5'-triphosphate = DNA(n+1) + diphosphate. In terms of biological role, poorly processive, error-prone DNA polymerase involved in untargeted mutagenesis. Copies undamaged DNA at stalled replication forks, which arise in vivo from mismatched or misaligned primer ends. These misaligned primers can be extended by PolIV. Exhibits no 3'-5' exonuclease (proofreading) activity. May be involved in translesional synthesis, in conjunction with the beta clamp from PolIII. This is DNA polymerase IV from Bacillus cereus (strain ATCC 14579 / DSM 31 / CCUG 7414 / JCM 2152 / NBRC 15305 / NCIMB 9373 / NCTC 2599 / NRRL B-3711).